An 80-amino-acid chain; its full sequence is CDC42 small effector protein 1 (80 aa).

Residues C10 and C11 are each lipidated (S-palmitoyl cysteine). The 14-residue stretch at 30-43 folds into the CRIB domain; the sequence is IGEPMNFVHLTHIG. The disordered stretch occupies residues 48–80; it reads GAGDGLAMTGAVQEQMRSKGNHRDRPWSNSRAL.

This sequence belongs to the CDC42SE/SPEC family. Interacts with CDC42 (in GTP-bound form). Interacts weakly with RAC1 and not at all with RHOA.

Its subcellular location is the cytoplasm. The protein resides in the cytoskeleton. The protein localises to the cell membrane. Its function is as follows. Probably involved in the organization of the actin cytoskeleton by acting downstream of CDC42, inducing actin filament assembly. Alters CDC42-induced cell shape changes. In activated T-cells, may play a role in CDC42-mediated F-actin accumulation at the immunological synapse. May play a role in early contractile events in phagocytosis in macrophages. The chain is CDC42 small effector protein 1 (Cdc42se1) from Mus musculus (Mouse).